A 212-amino-acid chain; its full sequence is Urease accessory protein UreG 2 (212 aa).

11-18 (GPVGSGKM) provides a ligand contact to GTP.

The protein belongs to the SIMIBI class G3E GTPase family. UreG subfamily. In terms of assembly, homodimer. UreD, UreF and UreG form a complex that acts as a GTP-hydrolysis-dependent molecular chaperone, activating the urease apoprotein by helping to assemble the nickel containing metallocenter of UreC. The UreE protein probably delivers the nickel.

It is found in the cytoplasm. In terms of biological role, facilitates the functional incorporation of the urease nickel metallocenter. This process requires GTP hydrolysis, probably effectuated by UreG. Functionally, disrupting the ure2 operon has no effect on urease activity, or pathogen survival in BALB/c mice when inoculated by gavage, but confers slightly enhanced resistance to low pH killing in vitro. The polypeptide is Urease accessory protein UreG 2 (Brucella suis biovar 1 (strain 1330)).